The chain runs to 212 residues: Uridine kinase (212 aa).

13–20 (GASASGKS) contributes to the ATP binding site.

Belongs to the uridine kinase family.

The protein resides in the cytoplasm. The catalysed reaction is uridine + ATP = UMP + ADP + H(+). The enzyme catalyses cytidine + ATP = CMP + ADP + H(+). It participates in pyrimidine metabolism; CTP biosynthesis via salvage pathway; CTP from cytidine: step 1/3. The protein operates within pyrimidine metabolism; UMP biosynthesis via salvage pathway; UMP from uridine: step 1/1. In Shewanella halifaxensis (strain HAW-EB4), this protein is Uridine kinase.